We begin with the raw amino-acid sequence, 200 residues long: LexA repressor (200 aa).

Residues 28-48 (RAEISNRLGFRSANAAEEHLK) constitute a DNA-binding region (H-T-H motif). Catalysis depends on for autocatalytic cleavage activity residues Ser-121 and Lys-158.

The protein belongs to the peptidase S24 family. As to quaternary structure, homodimer.

It carries out the reaction Hydrolysis of Ala-|-Gly bond in repressor LexA.. Functionally, represses a number of genes involved in the response to DNA damage (SOS response), including recA and lexA. In the presence of single-stranded DNA, RecA interacts with LexA causing an autocatalytic cleavage which disrupts the DNA-binding part of LexA, leading to derepression of the SOS regulon and eventually DNA repair. The polypeptide is LexA repressor (Hahella chejuensis (strain KCTC 2396)).